The following is a 362-amino-acid chain: Chorismate synthase (362 aa).

Arg47 provides a ligand contact to NADP(+). Residues 124 to 126 (RAS), Gly286, 301 to 305 (KPTAT), and Arg327 each bind FMN.

Belongs to the chorismate synthase family. As to quaternary structure, homotetramer. FMNH2 is required as a cofactor.

The catalysed reaction is 5-O-(1-carboxyvinyl)-3-phosphoshikimate = chorismate + phosphate. The protein operates within metabolic intermediate biosynthesis; chorismate biosynthesis; chorismate from D-erythrose 4-phosphate and phosphoenolpyruvate: step 7/7. Catalyzes the anti-1,4-elimination of the C-3 phosphate and the C-6 proR hydrogen from 5-enolpyruvylshikimate-3-phosphate (EPSP) to yield chorismate, which is the branch point compound that serves as the starting substrate for the three terminal pathways of aromatic amino acid biosynthesis. This reaction introduces a second double bond into the aromatic ring system. This Prochlorococcus marinus (strain SARG / CCMP1375 / SS120) protein is Chorismate synthase.